Here is a 66-residue protein sequence, read N- to C-terminus: Large ribosomal subunit protein bL35 (66 aa).

The span at 1-16 (MPKQKTHRASAKRFKR) shows a compositional bias: basic residues. The interval 1-20 (MPKQKTHRASAKRFKRTGSG) is disordered.

Belongs to the bacterial ribosomal protein bL35 family.

The polypeptide is Large ribosomal subunit protein bL35 (Streptococcus uberis (strain ATCC BAA-854 / 0140J)).